A 407-amino-acid chain; its full sequence is Phosphonoacetate hydrolase (407 aa).

Residues Asp-25, Thr-64, Asp-202, His-206, Asp-241, His-242, and His-368 each contribute to the Zn(2+) site. Positions 64 and 202 each coordinate substrate. 2 residues coordinate substrate: His-242 and His-368.

It belongs to the alkaline phosphatase family. PhnA subfamily. Homodimer. The cofactor is Zn(2+).

The enzyme catalyses phosphonoacetate + H2O = acetate + phosphate + H(+). Completely inhibited by EDTA and 1,10-phenanthroline. Moderately inhibited by the phosphonocarboxylic acids phosphonoformate and 3-phosphonopropionate and the phosphonate herbicide glyphosate. Partially inhibited by the reducing agents sodium sulfide and dithiotheitol and the chelating agent iminodiacetate. Nonphosphonate analogs of phosphonoacetate, such as arsonoacetate, sulfonoacetate and malonate are poor inhibitors. Inorganic phosphate, acetate and the known phosphonotase inhibitor phosphite have little effect on activity. Not inhibited by the alkylphosphonic acids methylphosphonate and ethylphosphonate, or the aminoalkylphosphonates 2-aminoethylphosphonate, 3-aminopropylphosphonate and 4-aminobutylphosphonate. Fe(3+), Ca(2+), Mg(2+) and Cs(+) have no effect on activity. Activity is slightly increased by the aminoalkylphosphonates 1-aminoethylphosphonate, 1-aminobutylphosphonate, 2-amino-4-butylphosphonate. Activity is increased by Zn(2+), Mn(2+) and Co(2+), these 3 metal ions also allow recovery of activity after EDTA treatment. In terms of biological role, specifically hydrolyzes phosphonoacetate. Does not have activity on other organophosphonates or acetates. This chain is Phosphonoacetate hydrolase, found in Pseudomonas fluorescens.